Here is a 113-residue protein sequence, read N- to C-terminus: Ig kappa chain V-II region 17S29.1 (113 aa).

The segment at D1 to C23 is framework-1. A disulfide bond links C23 and C93. Positions R24–Y39 are complementarity-determining-1. Residues W40–Y54 are framework-2. The tract at residues Q55–S61 is complementarity-determining-2. A framework-3 region spans residues G62–C93. Residues A94–T102 are complementarity-determining-3. The segment at F103–K112 is framework-4.

In terms of biological role, anti-streptococcal group A carbohydrate antibody. The sequence is that of Ig kappa chain V-II region 17S29.1 from Mus musculus (Mouse).